The primary structure comprises 801 residues: MNNKVLQTLEYDKIKLQLNDFLSTPTGLQEANELQPVSDVDLINHWLAETADAVLIDRLKGGIPLSKLSDITPHLKRLNIEASLSATELSEMSLVLRNTSTIASFFEQMQDEAIGESLRVLPEQAKNLVTLPDITRQIQIAIDSSGRLNDEASYELKHVRDRINGTEQAVKNQMQAYTRGKTAQYLSDPIVTIRSDRYVLPVKAEYRSQFGGVVHDQSQTGQTLYVEPQAVVTLNNKLSELRVQEQAEEQRVLQELSATLAPHTEEIANNVTILGHFDFVNAKARLAARLDAMQPMVNTENKVDLQQAWHPLLDKDLAVANDIALGDGYKAIIITGPNTGGKTITIKTLGILQLMAQSGLFITTKRPSTVGVFHEIFADIGDEQSIEQSLSTFSSHMANIVSMIDRIDDKTLVIFDELGAGTDPAEGAALAIAILDKVASLGAFVIATTHYPELKLYGYNRPETLNASMVFDVSTLKPTYQFLMGVPGQSNALAIAKRLGFGDDVIGAATALTSDADQDLNQMIADLVAQRDAVKQHDVALSEQLKATEKQSEALSEQQRQLEKERAKIVLDAKNEANHIVAATKKQAEQMISEIRKARLNAGQSAGELSEQDLQAKKRQLDGLRQNSSLEKNKILQKAKRAKQLAAGDEITVQSYGQQGTLIKQHSNGQWEVEMGILKMLVDEDDIVKTEATAKAQQSKAKQKQQKIVKTKTASGSARATAKSRLDLRGVRYEAALAELDRYLDTAVLANLGTVEIIHGKGTGALRQGVTEFLRSDRRVKAYHFANANAGGDGATIAELS.

Residue 336–343 participates in ATP binding; that stretch reads GPNTGGKT. The segment at 696–721 is disordered; the sequence is AQQSKAKQKQQKIVKTKTASGSARAT. The segment covering 701-710 has biased composition (basic residues); sequence AKQKQQKIVK. The region spanning 726-801 is the Smr domain; sequence LDLRGVRYEA…GDGATIAELS (76 aa).

It belongs to the DNA mismatch repair MutS family. MutS2 subfamily. In terms of assembly, homodimer. Binds to stalled ribosomes, contacting rRNA.

Its function is as follows. Endonuclease that is involved in the suppression of homologous recombination and thus may have a key role in the control of bacterial genetic diversity. Acts as a ribosome collision sensor, splitting the ribosome into its 2 subunits. Detects stalled/collided 70S ribosomes which it binds and splits by an ATP-hydrolysis driven conformational change. Acts upstream of the ribosome quality control system (RQC), a ribosome-associated complex that mediates the extraction of incompletely synthesized nascent chains from stalled ribosomes and their subsequent degradation. Probably generates substrates for RQC. The chain is Endonuclease MutS2 from Leuconostoc citreum (strain KM20).